Consider the following 601-residue polypeptide: Glutathione-regulated potassium-efflux system protein KefB (601 aa).

Transmembrane regions (helical) follow at residues 5–25 (SLLM…PLAA), 29–49 (IGAV…GLGF), 55–75 (EILH…GLEL), 87–107 (IFGV…GLLW), 115–135 (AAII…LQLM), 152–172 (VLLF…LLAG), 180–202 (WMKL…YLLR), 207–227 (FIAA…LVLG), 230–250 (LFME…GILL), 268–288 (GLLL…GVLY), 291–311 (ILEI…VLYL), 324–344 (LQFS…FSAA), and 356–376 (PLLL…MQGV). The RCK N-terminal domain maps to 400-519 (KPQVIVVGFG…AGVTQFSRET (120 aa)).

This sequence belongs to the monovalent cation:proton antiporter 2 (CPA2) transporter (TC 2.A.37) family. KefB subfamily. Interacts with the regulatory subunit KefG.

The protein resides in the cell inner membrane. Its function is as follows. Pore-forming subunit of a potassium efflux system that confers protection against electrophiles. Catalyzes K(+)/H(+) antiport. This Erwinia tasmaniensis (strain DSM 17950 / CFBP 7177 / CIP 109463 / NCPPB 4357 / Et1/99) protein is Glutathione-regulated potassium-efflux system protein KefB.